Here is a 724-residue protein sequence, read N- to C-terminus: Degenerin mec-10 (724 aa).

Over residues 1 to 15 (MNRNPRMSKFQPNPR) the composition is skewed to polar residues. The tract at residues 1 to 22 (MNRNPRMSKFQPNPRSRSRFQD) is disordered. The Cytoplasmic segment spans residues 1–122 (MNRNPRMSKF…GQAPNSLYRA (122 aa)). The helical transmembrane segment at 123–143 (AWVFLLLICAIQFINQAVAVI) threads the bilayer. The Extracellular segment spans residues 144–684 (QKYQKMDKIT…FGGHLGLWSG (541 aa)). The segment at 229–265 (KRGAGEKGTFEPANSACECDEEDGSNECEERSTEKPS) is disordered. Over residues 246–255 (ECDEEDGSNE) the composition is skewed to acidic residues. The segment covering 256-265 (CEERSTEKPS) has biased composition (basic and acidic residues). N-linked (GlcNAc...) asparagine glycans are attached at residues Asn-293, Asn-369, Asn-463, Asn-605, and Asn-624. The helical transmembrane segment at 685–705 (VSVMTCCEFVCLAFELIYMAI) threads the bilayer. Over 706–724 (AHHINQQRIRRRENAANEY) the chain is Cytoplasmic.

It belongs to the amiloride-sensitive sodium channel (TC 1.A.6) family. Component of a non-voltage-gated amiloride-sensitive cation channel complex (also called the degenerin channel complex) composed of at least the mec-2, mec-4, mec-6 and mec-10 subunits; the complex mediates mechanotransduction in touch cells. Interacts with mec-4 and mec-6.

It localises to the cell membrane. Its function is as follows. Subunit of an amiloride-sensitive cation channel (degenerin channel complex) permeable for sodium, potassium, lithium and N-methylglucamine, and required for mechanosensory transduction (touch sensitivity). Negatively regulates the turning step of male mating behavior. The sequence is that of Degenerin mec-10 from Caenorhabditis elegans.